The following is a 156-amino-acid chain: ATP synthase subunit b (156 aa).

A helical transmembrane segment spans residues 3–23 (INFTLLAQALAFAGLIWIIAT).

It belongs to the ATPase B chain family. In terms of assembly, F-type ATPases have 2 components, F(1) - the catalytic core - and F(0) - the membrane proton channel. F(1) has five subunits: alpha(3), beta(3), gamma(1), delta(1), epsilon(1). F(0) has three main subunits: a(1), b(2) and c(10-14). The alpha and beta chains form an alternating ring which encloses part of the gamma chain. F(1) is attached to F(0) by a central stalk formed by the gamma and epsilon chains, while a peripheral stalk is formed by the delta and b chains.

The protein resides in the cell inner membrane. Its function is as follows. F(1)F(0) ATP synthase produces ATP from ADP in the presence of a proton or sodium gradient. F-type ATPases consist of two structural domains, F(1) containing the extramembraneous catalytic core and F(0) containing the membrane proton channel, linked together by a central stalk and a peripheral stalk. During catalysis, ATP synthesis in the catalytic domain of F(1) is coupled via a rotary mechanism of the central stalk subunits to proton translocation. Component of the F(0) channel, it forms part of the peripheral stalk, linking F(1) to F(0). The protein is ATP synthase subunit b of Stenotrophomonas maltophilia (strain R551-3).